A 166-amino-acid polypeptide reads, in one-letter code: Putative transmembrane protein encoded by LINC00477 (166 aa).

Residue N7 is glycosylated (N-linked (GlcNAc...) asparagine). The next 3 membrane-spanning stretches (helical) occupy residues 15 to 35, 41 to 61, and 63 to 83; these read VSSFQGSPATPLSFLFFFFLC, MTGCFTFFLDFIFFFAGVLGP, and PMGMYSGASTLTGFFLLRFLG. Residues 127 to 166 are disordered; the sequence is LPVPHPPSPLSKCPQHPRPRRTKGPGLRKLWGPGPPFFPS.

The protein localises to the membrane. The sequence is that of Putative transmembrane protein encoded by LINC00477 (LINC00477) from Homo sapiens (Human).